Reading from the N-terminus, the 212-residue chain is Adapter protein MecA 2 (212 aa).

This sequence belongs to the MecA family. Homodimer.

Its function is as follows. Enables the recognition and targeting of unfolded and aggregated proteins to the ClpC protease or to other proteins involved in proteolysis. Acts negatively in the development of competence by binding ComK and recruiting it to the ClpCP protease. When overexpressed, inhibits sporulation. Also involved in Spx degradation by ClpC. The chain is Adapter protein MecA 2 (mecA2) from Halalkalibacterium halodurans (strain ATCC BAA-125 / DSM 18197 / FERM 7344 / JCM 9153 / C-125) (Bacillus halodurans).